A 385-amino-acid chain; its full sequence is Protein pelota homolog (385 aa).

Lys162 is covalently cross-linked (Glycyl lysine isopeptide (Lys-Gly) (interchain with G-Cter in SUMO2)). Phosphoserine occurs at positions 374, 380, 381, and 382.

It belongs to the eukaryotic release factor 1 family. Pelota subfamily. In terms of assembly, component of the Pelota-HBS1L complex, also named Dom34-Hbs1 complex, composed of PELO and HBS1L. Interacts with PINK1. Interacts with ABCE1. Interacts with CNOT4. A divalent metal cation serves as cofactor.

It localises to the cytoplasm. In terms of biological role, component of the Pelota-HBS1L complex, a complex that recognizes stalled ribosomes and triggers the No-Go Decay (NGD) pathway. In the Pelota-HBS1L complex, PELO recognizes ribosomes stalled at the 3' end of an mRNA and engages stalled ribosomes by destabilizing mRNA in the mRNA channel. Following mRNA extraction from stalled ribosomes by the SKI complex, the Pelota-HBS1L complex promotes recruitment of ABCE1, which drives the disassembly of stalled ribosomes, followed by degradation of damaged mRNAs as part of the NGD pathway. As part of the PINK1-regulated signaling, upon mitochondrial damage is recruited to the ribosome/mRNA-ribonucleoprotein complex associated to mitochondrial outer membrane thereby enabling the recruitment of autophagy receptors and induction of mitophagy. This is Protein pelota homolog (PELO) from Bos taurus (Bovine).